The chain runs to 86 residues: Large ribosomal subunit protein bL27 (86 aa).

A disordered region spans residues 1–24 (MATKKAGGSSRNGRDSAGRRLGVK).

It belongs to the bacterial ribosomal protein bL27 family.

In Rickettsia conorii (strain ATCC VR-613 / Malish 7), this protein is Large ribosomal subunit protein bL27.